The following is a 101-amino-acid chain: Large ribosomal subunit protein bL21 (101 aa).

The protein belongs to the bacterial ribosomal protein bL21 family. Part of the 50S ribosomal subunit. Contacts protein L20.

This protein binds to 23S rRNA in the presence of protein L20. In Corynebacterium diphtheriae (strain ATCC 700971 / NCTC 13129 / Biotype gravis), this protein is Large ribosomal subunit protein bL21.